The sequence spans 457 residues: MSTDTSQVKVKFFTREKDESLHVDDVPMYAPISLKRYGLSEIVNHLLESETPIPFDFLIDGELLRTSLQEYLTKKGLSSETTLTVEYTRAVLPPSFLANFNNDDWVSALDVSDDFRHIYSGSYDGVVRTWNMSGKVEKQYSGHTGAVKAVKYISNTRIVSAGNDRSLRLWKTKNDDGSVSNNTGDENDEENIEDGKTLAILEGHKAPVVSLDVASNSRILSASYDNTVALWSTIYKEMTAIDHLEEIQNPNNKISTAAKKRRKLTLKDGTIRRRAPLSLLESHTGPVEQVIFDHGDNTVGYSVSQDHTIKTWDLVTARCIDTKTTSYPLLSIAQMPTLNLLACGSSVRHITLHDPRVSSSAKITQKQLVGHKNFVVGLDTCSENEYLLCSASHDGTVKVWDVRSTSPMYTITRQDPTVEKGVNDKVFAVKWAKSIGIISGGQDKKIQINKGDNIFKN.

The segment at 8 to 89 (VKVKFFTREK…ETTLTVEYTR (82 aa)) is ubiquitin-like (UBL) domain. The interval 99–457 (NFNNDDWVSA…INKGDNIFKN (359 aa)) is sufficient for interaction with ERB1 and association with 66S pre-ribosomes. WD repeat units follow at residues 101–140 (NNDD…EKQY), 142–180 (GHTG…GSVS), 203–241 (GHKA…MTAI), 282–322 (SHTG…CIDT), 324–363 (TTSY…SAKI), 370–410 (GHKN…PMYT), and 421–457 (GVND…IFKN). Positions 172-191 (TKNDDGSVSNNTGDENDEEN) are disordered.

It belongs to the WD repeat WDR12/YTM1 family. In terms of assembly, component of the NOP7 complex, composed of ERB1, NOP7 and YTM1. The complex is held together by ERB1, which interacts with NOP7 via its N-terminal domain and with YTM1 via a high-affinity interaction between the seven-bladed beta-propeller domains of the 2 proteins. The NOP7 complex associates with the 66S pre-ribosome. Interacts (via UBL domain) with MDN1 (via VWFA/MIDAS domain).

It localises to the nucleus. The protein localises to the nucleolus. Its subcellular location is the nucleoplasm. Functionally, component of the NOP7 complex, which is required for maturation of the 25S and 5.8S ribosomal RNAs and formation of the 60S ribosome. The chain is Ribosome biogenesis protein YTM1 from Candida glabrata (strain ATCC 2001 / BCRC 20586 / JCM 3761 / NBRC 0622 / NRRL Y-65 / CBS 138) (Yeast).